A 475-amino-acid chain; its full sequence is Ribulose bisphosphate carboxylase large chain (475 aa).

Residues methionine 1–serine 2 constitute a propeptide that is removed on maturation. Proline 3 is subject to N-acetylproline. Residue lysine 14 is modified to N6,N6,N6-trimethyllysine. Substrate is bound by residues asparagine 123 and threonine 173. Residue lysine 175 is the Proton acceptor of the active site. Residue lysine 177 coordinates substrate. Residues lysine 201, aspartate 203, and glutamate 204 each coordinate Mg(2+). Residue lysine 201 is modified to N6-carboxylysine. The Proton acceptor role is filled by histidine 294. Substrate is bound by residues arginine 295, histidine 327, and serine 379.

It belongs to the RuBisCO large chain family. Type I subfamily. In terms of assembly, heterohexadecamer of 8 large chains and 8 small chains; disulfide-linked. The disulfide link is formed within the large subunit homodimers. It depends on Mg(2+) as a cofactor. The disulfide bond which can form in the large chain dimeric partners within the hexadecamer appears to be associated with oxidative stress and protein turnover.

It is found in the plastid. The protein localises to the chloroplast. The catalysed reaction is 2 (2R)-3-phosphoglycerate + 2 H(+) = D-ribulose 1,5-bisphosphate + CO2 + H2O. It catalyses the reaction D-ribulose 1,5-bisphosphate + O2 = 2-phosphoglycolate + (2R)-3-phosphoglycerate + 2 H(+). Its function is as follows. RuBisCO catalyzes two reactions: the carboxylation of D-ribulose 1,5-bisphosphate, the primary event in carbon dioxide fixation, as well as the oxidative fragmentation of the pentose substrate in the photorespiration process. Both reactions occur simultaneously and in competition at the same active site. The sequence is that of Ribulose bisphosphate carboxylase large chain from Pelargonium hortorum (Common geranium).